The following is a 309-amino-acid chain: Aspartate carbamoyltransferase catalytic subunit (309 aa).

Carbamoyl phosphate contacts are provided by Arg55 and Thr56. Lys85 contributes to the L-aspartate binding site. Residues Arg106, His135, and Gln138 each contribute to the carbamoyl phosphate site. L-aspartate contacts are provided by Arg168 and Arg230. Carbamoyl phosphate contacts are provided by Leu268 and Pro269.

It belongs to the aspartate/ornithine carbamoyltransferase superfamily. ATCase family. As to quaternary structure, heterododecamer (2C3:3R2) of six catalytic PyrB chains organized as two trimers (C3), and six regulatory PyrI chains organized as three dimers (R2).

It carries out the reaction carbamoyl phosphate + L-aspartate = N-carbamoyl-L-aspartate + phosphate + H(+). It participates in pyrimidine metabolism; UMP biosynthesis via de novo pathway; (S)-dihydroorotate from bicarbonate: step 2/3. Functionally, catalyzes the condensation of carbamoyl phosphate and aspartate to form carbamoyl aspartate and inorganic phosphate, the committed step in the de novo pyrimidine nucleotide biosynthesis pathway. The chain is Aspartate carbamoyltransferase catalytic subunit from Wigglesworthia glossinidia brevipalpis.